The chain runs to 426 residues: Dihydroorotase (426 aa).

The Zn(2+) site is built by histidine 58 and histidine 60. Residues 60–62 (HLR) and asparagine 92 each bind substrate. The Zn(2+) site is built by aspartate 150, histidine 177, and histidine 230. Asparagine 276 contributes to the substrate binding site. Zn(2+) is bound at residue aspartate 303. Aspartate 303 is an active-site residue. Residues histidine 307 and 321-322 (FG) each bind substrate.

This sequence belongs to the metallo-dependent hydrolases superfamily. DHOase family. Class I DHOase subfamily. The cofactor is Zn(2+).

The catalysed reaction is (S)-dihydroorotate + H2O = N-carbamoyl-L-aspartate + H(+). Its pathway is pyrimidine metabolism; UMP biosynthesis via de novo pathway; (S)-dihydroorotate from bicarbonate: step 3/3. Its function is as follows. Catalyzes the reversible cyclization of carbamoyl aspartate to dihydroorotate. In Listeria monocytogenes serotype 4a (strain HCC23), this protein is Dihydroorotase.